The primary structure comprises 100 residues: NADH-quinone oxidoreductase subunit K (100 aa).

3 helical membrane passes run 4 to 24 (LQHG…GLLV), 28 to 48 (LLFM…AFIV), and 60 to 80 (VMYI…LALL).

This sequence belongs to the complex I subunit 4L family. As to quaternary structure, NDH-1 is composed of 13 different subunits. Subunits NuoA, H, J, K, L, M, N constitute the membrane sector of the complex.

It localises to the cell inner membrane. The catalysed reaction is a quinone + NADH + 5 H(+)(in) = a quinol + NAD(+) + 4 H(+)(out). Functionally, NDH-1 shuttles electrons from NADH, via FMN and iron-sulfur (Fe-S) centers, to quinones in the respiratory chain. The immediate electron acceptor for the enzyme in this species is believed to be ubiquinone. Couples the redox reaction to proton translocation (for every two electrons transferred, four hydrogen ions are translocated across the cytoplasmic membrane), and thus conserves the redox energy in a proton gradient. The chain is NADH-quinone oxidoreductase subunit K from Serratia proteamaculans (strain 568).